We begin with the raw amino-acid sequence, 479 residues long: Ribulose bisphosphate carboxylase large chain (479 aa).

The propeptide occupies 1–2; the sequence is MS. 2 residues coordinate substrate: N123 and T173. Catalysis depends on K175, which acts as the Proton acceptor. K177 serves as a coordination point for substrate. K201, D203, and E204 together coordinate Mg(2+). An N6-carboxylysine modification is found at K201. A Phosphoserine modification is found at S208. H294 (proton acceptor) is an active-site residue. 2 residues coordinate substrate: R295 and H327. Position 330 is a phosphothreonine (T330). S379 contributes to the substrate binding site.

It belongs to the RuBisCO large chain family. Type I subfamily. In terms of assembly, heterohexadecamer of 8 large chains and 8 small chains; disulfide-linked. The disulfide link is formed within the large subunit homodimers. The cofactor is Mg(2+). The disulfide bond which can form in the large chain dimeric partners within the hexadecamer appears to be associated with oxidative stress and protein turnover.

Its subcellular location is the plastid. It localises to the chloroplast. The catalysed reaction is 2 (2R)-3-phosphoglycerate + 2 H(+) = D-ribulose 1,5-bisphosphate + CO2 + H2O. The enzyme catalyses D-ribulose 1,5-bisphosphate + O2 = 2-phosphoglycolate + (2R)-3-phosphoglycerate + 2 H(+). RuBisCO catalyzes two reactions: the carboxylation of D-ribulose 1,5-bisphosphate, the primary event in carbon dioxide fixation, as well as the oxidative fragmentation of the pentose substrate in the photorespiration process. Both reactions occur simultaneously and in competition at the same active site. This is Ribulose bisphosphate carboxylase large chain from Crucihimalaya wallichii (Rock-cress).